The chain runs to 854 residues: Protein SEY1 homolog (854 aa).

Residues 1-724 (MAAFSGETAV…LRNIESGKQS (724 aa)) are Cytoplasmic-facing. The GB1/RHD3-type G domain occupies 49–291 (GVNYHVVGVF…NSNFLFSNCS (243 aa)). 59–66 (GGQSSGKS) contributes to the GTP binding site. A coiled-coil region spans residues 336–386 (KHAAIEEFKEVCEEYTKKIQRGDVIPQFTRALEETIERLLKNFSDQTKLYK). A helical membrane pass occupies residues 725 to 745 (LPPWVLPVMLLLGWNELYYLL). Residues 746-748 (TSP) lie on the Lumenal side of the membrane. A helical transmembrane segment spans residues 749–769 (ILLIAIIVIAVLFFKTFLKSQ). Topologically, residues 770 to 854 (LEVLEEKCPV…CRESRDKGED (85 aa)) are cytoplasmic. A disordered region spans residues 808–854 (GGGGAQFRDPTQATSVSGASAGVSSESSSAASPRRRVCRESRDKGED). Residues 822-839 (SVSGASAGVSSESSSAAS) show a composition bias toward low complexity. Positions 845 to 854 (CRESRDKGED) are enriched in basic and acidic residues.

Belongs to the TRAFAC class dynamin-like GTPase superfamily. GB1/RHD3 GTPase family. RHD3 subfamily.

The protein resides in the endoplasmic reticulum membrane. Its function is as follows. Probable GTP-binding protein that may be involved in cell development. The chain is Protein SEY1 homolog from Trypanosoma brucei brucei (strain 927/4 GUTat10.1).